We begin with the raw amino-acid sequence, 276 residues long: Large ribosomal subunit protein uL2 (276 aa).

The tract at residues 224–276 (VAMNPVDHPHGGGEGKTGEGRVPVSPWGTPTKGYRTRRNKRTTSMIVQRRQKR) is disordered. The span at 230-242 (DHPHGGGEGKTGE) shows a compositional bias: basic and acidic residues.

This sequence belongs to the universal ribosomal protein uL2 family. As to quaternary structure, part of the 50S ribosomal subunit. Forms a bridge to the 30S subunit in the 70S ribosome.

One of the primary rRNA binding proteins. Required for association of the 30S and 50S subunits to form the 70S ribosome, for tRNA binding and peptide bond formation. It has been suggested to have peptidyltransferase activity; this is somewhat controversial. Makes several contacts with the 16S rRNA in the 70S ribosome. In Polynucleobacter asymbioticus (strain DSM 18221 / CIP 109841 / QLW-P1DMWA-1) (Polynucleobacter necessarius subsp. asymbioticus), this protein is Large ribosomal subunit protein uL2.